The following is a 294-amino-acid chain: Probable endonuclease 4 (294 aa).

Zn(2+) is bound by residues His-78, His-118, Glu-155, Asp-189, His-192, His-226, Asp-239, His-241, and Glu-271.

The protein belongs to the AP endonuclease 2 family. The cofactor is Zn(2+).

The enzyme catalyses Endonucleolytic cleavage to 5'-phosphooligonucleotide end-products.. Endonuclease IV plays a role in DNA repair. It cleaves phosphodiester bonds at apurinic or apyrimidinic (AP) sites, generating a 3'-hydroxyl group and a 5'-terminal sugar phosphate. The chain is Probable endonuclease 4 from Oleidesulfovibrio alaskensis (strain ATCC BAA-1058 / DSM 17464 / G20) (Desulfovibrio alaskensis).